The primary structure comprises 389 residues: 5-hydroxytryptamine receptor 1B (389 aa).

Residues 1–27 (MEDAGTPCAPPPPAGSQTGAPPANLSS) form a disordered region. Residues 1-45 (MEDAGTPCAPPPPAGSQTGAPPANLSSAPHNCSAEGYIYQDSIAL) lie on the Extracellular side of the membrane. The span at 15–27 (GSQTGAPPANLSS) shows a compositional bias: polar residues. Asn24 and Asn31 each carry an N-linked (GlcNAc...) asparagine glycan. The chain crosses the membrane as a helical span at residues 46-71 (PWKVLLAILLALLTLATTLSNAFVIA). Topologically, residues 72–85 (TVYRTRKLHTPANY) are cytoplasmic. A helical transmembrane segment spans residues 86-110 (LIASLAVTDLLVSILVMPISTMYAV). Over 111 to 118 (TGRWTLGQ) the chain is Extracellular. The chain crosses the membrane as a helical span at residues 119-144 (VVCDLWLSSDITCCTASILHLCVIAL). Cysteines 121 and 198 form a disulfide. Positions 128 and 133 each coordinate ergotamine. The short motif at 145 to 147 (DRY) is the DRY motif; important for ligand-induced conformation changes and signaling element. The Cytoplasmic portion of the chain corresponds to 145–164 (DRYWAITDAVEYSAKRTPKR). The chain crosses the membrane as a helical span at residues 165-183 (AAVMIALVWVFSISISLPP). Topologically, residues 184-204 (FFWRQAKAEEEVSDCVVNTDH) are extracellular. Ergotamine is bound at residue Val200. The helical transmembrane segment at 205 to 228 (ILYTVYSTVGAFYFPTLLLIALYG) threads the bilayer. Residues 229–314 (RIYVEARSRI…AARERKATKT (86 aa)) lie on the Cytoplasmic side of the membrane. Positions 258-271 (DSPGSTSSVTSVNS) are enriched in polar residues. A disordered region spans residues 258 to 281 (DSPGSTSSVTSVNSRAPDVPSESG). The chain crosses the membrane as a helical span at residues 315-336 (LGIILGAFIVCWLPFFIISLVM). The Extracellular segment spans residues 337–346 (PICKDACWFH). A helical membrane pass occupies residues 347–369 (LAIFDFFTWLGYLNSLINPIIYT). The short motif at 364 to 368 (NPIIY) is the NPxxY motif; important for ligand-induced conformation changes and signaling element. At 370 to 389 (MSNEDFKQAFHKLIRFKCAS) the chain is on the cytoplasmic side. Residue Cys387 is the site of S-palmitoyl cysteine attachment.

It belongs to the G-protein coupled receptor 1 family. In terms of assembly, homodimer. Heterodimer with HTR1D. Post-translationally, phosphorylated. Desensitization of the receptor may be mediated by its phosphorylation. Palmitoylated.

The protein resides in the cell membrane. Its function is as follows. G-protein coupled receptor for 5-hydroxytryptamine (serotonin). Also functions as a receptor for ergot alkaloid derivatives, various anxiolytic and antidepressant drugs and other psychoactive substances, such as lysergic acid diethylamide (LSD). Ligand binding causes a conformation change that triggers signaling via guanine nucleotide-binding proteins (G proteins) and modulates the activity of downstream effectors, such as adenylate cyclase. HTR1B is coupled to G(i)/G(o) G alpha proteins and mediates inhibitory neurotransmission by inhibiting adenylate cyclase activity. Arrestin family members inhibit signaling via G proteins and mediate activation of alternative signaling pathways. Regulates the release of 5-hydroxytryptamine, dopamine and acetylcholine in the brain, and thereby affects neural activity, nociceptive processing, pain perception, mood and behavior. Besides, plays a role in vasoconstriction of cerebral arteries. This chain is 5-hydroxytryptamine receptor 1B (HTR1B), found in Vulpes vulpes (Red fox).